Here is a 125-residue protein sequence, read N- to C-terminus: Ribosome maturation factor RimP (125 aa).

It belongs to the RimP family.

Its subcellular location is the cytoplasm. Required for maturation of 30S ribosomal subunits. The sequence is that of Ribosome maturation factor RimP from Rickettsia canadensis (strain McKiel).